The sequence spans 980 residues: Thrombospondin-4 (980 aa).

The first 42 residues, 1 to 42, serve as a signal peptide directing secretion; it reads MTMITPSSKLTLTKGNKSWSSTRCGAFLLLHLVLQPWQRAGA. The Laminin G-like domain occupies 43 to 210; the sequence is QATPQVFDLL…LEELKLVVRG (168 aa). The region spanning 304-343 is the EGF-like 1 domain; sequence PTRRCDSSPCFRGVRCTDTRDGFQCGPCPDGYTGNGITCS. 21 cysteine pairs are disulfide-bonded: cysteine 308–cysteine 319, cysteine 313–cysteine 328, cysteine 331–cysteine 342, cysteine 348–cysteine 359, cysteine 353–cysteine 368, cysteine 371–cysteine 395, cysteine 401–cysteine 412, cysteine 406–cysteine 421, cysteine 424–cysteine 436, cysteine 442–cysteine 456, cysteine 450–cysteine 466, cysteine 468–cysteine 480, cysteine 496–cysteine 501, cysteine 506–cysteine 526, cysteine 542–cysteine 562, cysteine 565–cysteine 585, cysteine 601–cysteine 621, cysteine 624–cysteine 644, cysteine 662–cysteine 682, cysteine 702–cysteine 722, and cysteine 738–cysteine 959. Positions 344 to 381 constitute an EGF-like 2; calcium-binding domain; that stretch reads DVDECKYHPCYPGVRCTNLAPGFRCDACPVGFTGPMVQ. Positions 397–434 constitute an EGF-like 3; calcium-binding domain; sequence DVDECRNGACVLNSICINTLGSYRCGPCKPGYTGDQTR. Residues 438-481 enclose the EGF-like 4 domain; that stretch reads TERSCRNPEQNPCSVHAQCIEERQGDVTCVCGVGWAGRAGYVCG. TSP type-3 repeat units follow at residues 482–514, 515–550, 551–573, 574–609, 610–632, 633–670, 671–710, and 711–746; these read KDVD…NSGQ, EDAD…NVDQ, RNTD…NNDQ, KDTD…NRDQ, QDRD…NPNQ, SDVD…NSAQ, LDTD…NPAQ, and EDSN…EITL. The segment at 596-691 is disordered; sequence NILDNCPRVP…CDDDDDNDGM (96 aa). The segment covering 605-615 has biased composition (basic and acidic residues); sequence PNRDQQDRDGD. The N-linked (GlcNAc...) asparagine glycan is linked to asparagine 631. Residues 659 to 671 show a composition bias toward polar residues; sequence TDNCPTVINSAQL. The span at 679-690 shows a compositional bias: acidic residues; that stretch reads GDECDDDDDNDG. Residues 750 to 964 enclose the TSP C-terminal domain; that stretch reads RAYQTVVLDP…LKYRCNDTIP (215 aa). The N-linked (GlcNAc...) asparagine glycan is linked to asparagine 960.

The protein belongs to the thrombospondin family. As to quaternary structure, homopentamer; disulfide-linked. Interacts with PTBP3. Interacts (via EGF-like 3; calcium-binding domain) with ATF6 and facilitates its processing, activation and nuclear translocation. Interacts with NOTCH1. In terms of tissue distribution, mainly expressed in astrocytes, and in ressponse to peripheral nerve injury, significantly up-regulated in the dorsal spinal cord (at protein level).

Its subcellular location is the endoplasmic reticulum. It is found in the sarcoplasmic reticulum. It localises to the secreted. The protein localises to the extracellular space. The protein resides in the extracellular matrix. Its function is as follows. Adhesive glycoprotein that mediates cell-to-cell and cell-to-matrix interactions and is involved in various processes including cellular proliferation, migration, adhesion and attachment, inflammatory response to CNS injury, regulation of vascular inflammation and adaptive responses of the heart to pressure overload and in myocardial function and remodeling. Binds to structural extracellular matrix (ECM) proteins and modulates the ECM in response to tissue damage, contributing to cardioprotective and adaptive ECM remodeling. Plays a role in ER stress response, via its interaction with the activating transcription factor 6 alpha (ATF6) which produces adaptive ER stress response factors and protects myocardium from pressure overload. May contribute to spinal presynaptic hypersensitivity and neuropathic pain states after peripheral nerve injury. May play a role in regulating protective astrogenesis from the subventricular zone (SVZ) niche after injury in a NOTCH1-dependent manner. This Rattus norvegicus (Rat) protein is Thrombospondin-4 (Thbs4).